The sequence spans 230 residues: MGQKVHPVGIRLGIVKEHNSLWYAGPKSYSDCLVTDLQVREYLFKRLKSASVSRIKIERPSENVRITIATARPGIVIGKKGEDVERLRRDVAAKMGVPVHINIEEVRKPDLDARLVGDNVAGQLERRVMFRRAMKRAVQNAMKSGAEGIRIQLSGRLGGAEIARTEWYREGRVPLHTLRADIDYASVRAETTYGTIGVKVWIFRGEVLGGMEQVQEEQKQSKGAKKRGRG.

A KH type-2 domain is found at 39–107; that stretch reads VREYLFKRLK…PVHINIEEVR (69 aa).

This sequence belongs to the universal ribosomal protein uS3 family. As to quaternary structure, part of the 30S ribosomal subunit. Forms a tight complex with proteins S10 and S14.

In terms of biological role, binds the lower part of the 30S subunit head. Binds mRNA in the 70S ribosome, positioning it for translation. The chain is Small ribosomal subunit protein uS3 from Alcanivorax borkumensis (strain ATCC 700651 / DSM 11573 / NCIMB 13689 / SK2).